Reading from the N-terminus, the 495-residue chain is Lysine--tRNA ligase (495 aa).

2 residues coordinate Mg(2+): E406 and E413.

This sequence belongs to the class-II aminoacyl-tRNA synthetase family. As to quaternary structure, homodimer. Mg(2+) serves as cofactor.

The protein resides in the cytoplasm. It catalyses the reaction tRNA(Lys) + L-lysine + ATP = L-lysyl-tRNA(Lys) + AMP + diphosphate. This Leptospira interrogans serogroup Icterohaemorrhagiae serovar Lai (strain 56601) protein is Lysine--tRNA ligase.